We begin with the raw amino-acid sequence, 185 residues long: Prenylated Rab acceptor protein 1 (185 aa).

The Cytoplasmic portion of the chain corresponds to 1 to 78 (MAVEKDQQKD…RNVEYYQSNY (78 aa)). The interval 30–54 (AGREWLERRRATIRSWGSFVDQRRF) is required for interaction with prenylated RAB3A and VAMP2. 2 consecutive transmembrane segments (helical) span residues 79 to 94 (VFVFLGLILYCVATSP) and 95 to 112 (MLLVALAVFFGACYILYL). At 113–131 (RTLQSKFVLFGREVSPAHQ) the chain is on the cytoplasmic side. Transmembrane regions (helical) follow at residues 132-148 (YALAGGVSFPFFWLAGA) and 149-165 (GSAVFWVLGATLVVIGS). Residues 165–185 (SHAAFHQIEAVDGEELQMEPV) are required for interaction with GDI1. The Cytoplasmic portion of the chain corresponds to 166 to 185 (HAAFHQIEAVDGEELQMEPV). Residues 175-185 (VDGEELQMEPV) form a required for interaction with prenylated RAB3A and VAMP2 region. The homodimerization stretch occupies residues 175–185 (VDGEELQMEPV).

It belongs to the PRA1 family. As to quaternary structure, homodimer. Interacts with VAMP2 (synaptobrevin-2), prenylated Rab proteins, GDI1, NDRG1 and PCLO.

It is found in the cell membrane. The protein resides in the cytoplasm. The protein localises to the golgi apparatus. Its subcellular location is the cytoplasmic vesicle. It localises to the secretory vesicle. It is found in the synaptic vesicle. In terms of biological role, general Rab protein regulator required for vesicle formation from the Golgi complex. May control vesicle docking and fusion by mediating the action of Rab GTPases to the SNARE complexes. In addition it inhibits the removal of Rab GTPases from the membrane by GDI1. The sequence is that of Prenylated Rab acceptor protein 1 (RABAC1) from Bos taurus (Bovine).